Consider the following 319-residue polypeptide: Mitochondrial fission regulator 1-like (319 aa).

The tract at residues 1–35 (MASLGAGAEPESVLFGKDGTEACESPEGRRSGRRK) is disordered.

It belongs to the MTFR1 family.

Its subcellular location is the mitochondrion outer membrane. Functionally, mitochondrial protein required for adaptation of miochondrial dynamics to metabolic changes. Regulates mitochondrial morphology at steady state and mediates AMPK-dependent stress-induced mitochondrial fragmentation via the control of OPA1 levels. The sequence is that of Mitochondrial fission regulator 1-like (mtfr1l) from Xenopus tropicalis (Western clawed frog).